A 406-amino-acid chain; its full sequence is MTSSMFRSPCKIPSVKGFEQKSYVGLKAASYNVRVNSFKSSEVASQLQKIDSTLIWPVNALEAPPVPSKPATPLIDQPLQLSRRARRNRKCPTQRAAFQETNISPANFIYPLFIHEGEVDIPITSMPGRYMLGWRHGLIEEVARALDVGVNSVKLYPKVPEALKSPTGEEAFNDNGLIPRTVRLLKDRFPDLVIYTDVNFDEYSTTGHGGIVGEDGVILNDETIHQLRKQAVSQARAGADVVCTSEMLDGRVGAVRAALDAEGFQDVSIMSYSVKYTSSLYGRFRKVQLDKKTYQINPANSREALLEAREDEAEGADILMVKPALPSLDIIRLLKNQTLLPIGACQVSGEYSMIKAAGLLKMIDEEKVMMESLLCIRRAGADLILTYFALQAATKLCGENKRFSSN.

The transit peptide at 1-34 (MTSSMFRSPCKIPSVKGFEQKSYVGLKAASYNVR) directs the protein to the chloroplast. Lys275 functions as the Schiff-base intermediate with substrate in the catalytic mechanism. Arg285 and Lys291 together coordinate 5-aminolevulinate. Glu307 contributes to the Mg(2+) binding site. The Schiff-base intermediate with substrate role is filled by Lys322. 5-aminolevulinate contacts are provided by Ser348 and Tyr387.

Belongs to the ALAD family. As to quaternary structure, homooctamer. Mg(2+) is required as a cofactor.

The protein resides in the plastid. The protein localises to the chloroplast. The catalysed reaction is 2 5-aminolevulinate = porphobilinogen + 2 H2O + H(+). It participates in porphyrin-containing compound metabolism; protoporphyrin-IX biosynthesis; coproporphyrinogen-III from 5-aminolevulinate: step 1/4. The protein operates within porphyrin-containing compound metabolism; chlorophyll biosynthesis. Its function is as follows. Catalyzes an early step in the biosynthesis of tetrapyrroles. Binds two molecules of 5-aminolevulinate per subunit, each at a distinct site, and catalyzes their condensation to form porphobilinogen. The polypeptide is Probable delta-aminolevulinic acid dehydratase 2, chloroplastic (HEMB2) (Arabidopsis thaliana (Mouse-ear cress)).